A 25-amino-acid chain; its full sequence is Endoglucanase 1 (25 aa).

The interval 1 to 25 (YDASLKPNLQIPQKNIPNNDAVNIK) is disordered. The span at 10 to 25 (QIPQKNIPNNDAVNIK) shows a compositional bias: polar residues.

The catalysed reaction is Endohydrolysis of (1-&gt;4)-beta-D-glucosidic linkages in cellulose, lichenin and cereal beta-D-glucans.. This enzyme hydrolyzes cellotetraose, cellopentaose, and cellohexaose to cellobiose and cellotriose but does not hydrolyze cellobiose or cellotriose. This Ruminiclostridium josui (Clostridium josui) protein is Endoglucanase 1.